Here is a 378-residue protein sequence, read N- to C-terminus: DNA replication and repair protein RecF (378 aa).

30 to 37 (GRNGQGKT) contacts ATP.

Belongs to the RecF family.

Its subcellular location is the cytoplasm. The RecF protein is involved in DNA metabolism; it is required for DNA replication and normal SOS inducibility. RecF binds preferentially to single-stranded, linear DNA. It also seems to bind ATP. The polypeptide is DNA replication and repair protein RecF (Frankia alni (strain DSM 45986 / CECT 9034 / ACN14a)).